Reading from the N-terminus, the 81-residue chain is Salivary thrombin inhibitor anophelin (81 aa).

Residues 1-22 (MANKLFLISLLCVVLVAKIAQA) form the signal peptide. An N-linked (GlcNAc...) asparagine glycan is attached at N45. The tract at residues 70–73 (DPGR) is blocks active site cleft of host thrombin in a reverse direction compared to substrates.

This sequence belongs to the anophelin family. As to quaternary structure, interacts with human F2 (thrombin); the interaction results in thrombin inhibition.

The protein resides in the secreted. Functionally, salivary protein with anticoagulant activity that inhibits host thrombin (F2). This chain is Salivary thrombin inhibitor anophelin, found in Anopheles darlingi (Mosquito).